A 90-amino-acid chain; its full sequence is Small ribosomal subunit protein bS20 (90 aa).

This sequence belongs to the bacterial ribosomal protein bS20 family.

In terms of biological role, binds directly to 16S ribosomal RNA. In Francisella philomiragia subsp. philomiragia (strain ATCC 25017 / CCUG 19701 / FSC 153 / O#319-036), this protein is Small ribosomal subunit protein bS20.